The chain runs to 217 residues: ATP phosphoribosyltransferase (217 aa).

Belongs to the ATP phosphoribosyltransferase family. Short subfamily. Heteromultimer composed of HisG and HisZ subunits.

It is found in the cytoplasm. It catalyses the reaction 1-(5-phospho-beta-D-ribosyl)-ATP + diphosphate = 5-phospho-alpha-D-ribose 1-diphosphate + ATP. The protein operates within amino-acid biosynthesis; L-histidine biosynthesis; L-histidine from 5-phospho-alpha-D-ribose 1-diphosphate: step 1/9. Functionally, catalyzes the condensation of ATP and 5-phosphoribose 1-diphosphate to form N'-(5'-phosphoribosyl)-ATP (PR-ATP). Has a crucial role in the pathway because the rate of histidine biosynthesis seems to be controlled primarily by regulation of HisG enzymatic activity. The sequence is that of ATP phosphoribosyltransferase from Parasynechococcus marenigrum (strain WH8102).